Reading from the N-terminus, the 150-residue chain is Catabolic 3-dehydroquinase (150 aa).

Tyr-24 serves as the catalytic Proton acceptor. Substrate is bound by residues Asn-75, His-81, and Asp-88. The active-site Proton donor is His-101. Substrate contacts are provided by residues 102–103 (IS) and Arg-112.

It belongs to the type-II 3-dehydroquinase family. As to quaternary structure, homododecamer. Adopts a ring-like structure, composed of an arrangement of two hexameric rings stacked on top of one another.

It catalyses the reaction 3-dehydroquinate = 3-dehydroshikimate + H2O. Its pathway is aromatic compound metabolism; 3,4-dihydroxybenzoate biosynthesis; 3,4-dihydroxybenzoate from 3-dehydroquinate: step 1/2. In terms of biological role, is involved in the catabolism of quinate. Allows the utilization of quinate as carbon source via the beta-ketoadipate pathway. The polypeptide is Catabolic 3-dehydroquinase (Verticillium alfalfae (strain VaMs.102 / ATCC MYA-4576 / FGSC 10136) (Verticillium wilt of alfalfa)).